The sequence spans 115 residues: Replication initiation control protein YabA (115 aa).

Zn(2+)-binding residues include H85, C87, C101, and C104.

The protein belongs to the YabA family. In terms of assembly, homotetramer. Interacts with both DnaA and DnaN, acting as a bridge between these two proteins. Zn(2+) is required as a cofactor.

The protein localises to the cytoplasm. It localises to the nucleoid. Its function is as follows. Involved in control of chromosome replication initiation. Inhibits the cooperative binding of DnaA to the oriC region, thus negatively regulating initiation of chromosome replication. Inhibits the ability of DnaA-ATP to form a helix on DNA; does not disassemble preformed DnaA-DNA helices. Decreases the residence time of DnaA on the chromosome at its binding sites (oriC, replication forks and promoter-binding sites). Tethers DnaA to the replication machinery via the DNA polymerase beta sliding clamp subunit (dnaN). Associates with oriC and other DnaA targets on the chromosome in a DnaA-dependent manner. The sequence is that of Replication initiation control protein YabA from Lactiplantibacillus plantarum (strain ATCC BAA-793 / NCIMB 8826 / WCFS1) (Lactobacillus plantarum).